The chain runs to 111 residues: Nucleoid-associated protein CYA_1369 (111 aa).

It belongs to the YbaB/EbfC family. As to quaternary structure, homodimer.

The protein resides in the cytoplasm. The protein localises to the nucleoid. Binds to DNA and alters its conformation. May be involved in regulation of gene expression, nucleoid organization and DNA protection. The protein is Nucleoid-associated protein CYA_1369 of Synechococcus sp. (strain JA-3-3Ab) (Cyanobacteria bacterium Yellowstone A-Prime).